Reading from the N-terminus, the 273-residue chain is Cytosolic sulfotransferase 4 (273 aa).

74–79 lines the 3'-phosphoadenylyl sulfate pocket; sequence KCGTTW. His121 serves as the catalytic Proton acceptor. 3'-phosphoadenylyl sulfate is bound by residues Arg143 and 239 to 241; that span reads RKG.

It belongs to the sulfotransferase 1 family.

It localises to the cytoplasm. In terms of biological role, sulfotransferase that utilizes 3'-phospho-5'-adenylyl sulfate (PAPS) as sulfonate donor. The polypeptide is Cytosolic sulfotransferase 4 (SOT4) (Arabidopsis thaliana (Mouse-ear cress)).